Reading from the N-terminus, the 407-residue chain is Argininosuccinate synthase (407 aa).

ATP contacts are provided by residues 13 to 21 (AYSGGLDTS) and Ala40. Tyr91 and Ser96 together coordinate L-citrulline. ATP is bound at residue Gly121. Residues Thr123, Asn127, and Asp128 each contribute to the L-aspartate site. Residue Asn127 coordinates L-citrulline. Residues Arg131, Ser182, Ser191, Glu267, and Tyr279 each contribute to the L-citrulline site.

This sequence belongs to the argininosuccinate synthase family. Type 1 subfamily. Homotetramer.

It localises to the cytoplasm. The enzyme catalyses L-citrulline + L-aspartate + ATP = 2-(N(omega)-L-arginino)succinate + AMP + diphosphate + H(+). It functions in the pathway amino-acid biosynthesis; L-arginine biosynthesis; L-arginine from L-ornithine and carbamoyl phosphate: step 2/3. The protein is Argininosuccinate synthase of Agrobacterium fabrum (strain C58 / ATCC 33970) (Agrobacterium tumefaciens (strain C58)).